The chain runs to 457 residues: Multidrug resistance protein MdtK (457 aa).

12 helical membrane passes run 11 to 31, 53 to 73, 93 to 113, 127 to 147, 160 to 180, 188 to 208, 243 to 263, 276 to 296, 314 to 334, 350 to 370, 387 to 407, and 418 to 438; these read LLAL…MGFV, IWLP…PVIA, WLAG…GYII, AVGY…FQVA, GMVM…IFIY, LGGI…FIAM, LPIA…ALLV, IALN…AAVT, AART…IFTV, VVAL…SDSI, IFFI…YILA, and PAGF…LMML.

It belongs to the multi antimicrobial extrusion (MATE) (TC 2.A.66.1) family. MdtK subfamily.

The protein resides in the cell inner membrane. Its function is as follows. Multidrug efflux pump that functions probably as a Na(+)/drug antiporter. The protein is Multidrug resistance protein MdtK of Salmonella agona (strain SL483).